Here is a 176-residue protein sequence, read N- to C-terminus: Centromere protein R (176 aa).

A Glycyl lysine isopeptide (Lys-Gly) (interchain with G-Cter in SUMO2) cross-link involves residue K8. Position 17 is a phosphoserine (S17). The interval 20-50 (PSKIVRKKSITAYSPTTGTYQLSPFSSPATP) is DD1. K22 is covalently cross-linked (Glycyl lysine isopeptide (Lys-Gly) (interchain with G-Cter in SUMO2)). S28 is modified (phosphoserine). Over residues 34 to 48 (PTTGTYQLSPFSSPA) the composition is skewed to polar residues. Residues 34–78 (PTTGTYQLSPFSSPATPKEQEHRNGPSNETRKRSNLSSPVRQEST) are disordered. A compositionally biased stretch (basic and acidic residues) spans 51–65 (KEQEHRNGPSNETRK). Residues 63–66 (TRKR) carry the Nuclear localization signal motif. A Phosphoserine modification is found at S71. Residues 82–112 (RDGFMVLLSKIEISSEKTMEIMKNLSSIQAL) are a coiled coil. The short motif at 171 to 175 (LKAIL) is the LXXIL motif element.

In terms of assembly, homodimer; mediated by the coiled coil domain. Interacts with CCNA2 and MTA1. Interacts with NFKB1 NF-kappa-B subunit. Component of the CENPA-CAD complex, composed of CENPI, CENPK, CENPL, CENPO, CENPP, CENPQ, CENPR and CENPS. The CENPA-CAD complex interacts with the CENPA-NAC complex, at least composed of CENPA, CENPC, CENPH, CENPM, CENPN, CENPT and CENPU. Interacts with TASOR. In terms of tissue distribution, expressed in the spermatogonia and spermatocytes.

Its subcellular location is the nucleus. The protein localises to the chromosome. It is found in the centromere. It localises to the kinetochore. Transcription coregulator that can have both coactivator and corepressor functions. Involved in the coactivation of nuclear receptors for retinoid X (RXRs) and thyroid hormone (TRs) in a ligand-dependent fashion. In contrast, it does not coactivate nuclear receptors for retinoic acid, vitamin D, progesterone receptor, nor glucocorticoid. Acts as a coactivator for estrogen receptor alpha. Acts as a transcriptional corepressor via its interaction with the NFKB1 NF-kappa-B subunit, possibly by interfering with the transactivation domain of NFKB1. Induces apoptosis in breast cancer cells, but not in other cancer cells, via a caspase-2 mediated pathway that involves mitochondrial membrane permeabilization but does not require other caspases. May also act as an inhibitor of cyclin A-associated kinase. Also acts a component of the CENPA-CAD (nucleosome distal) complex, a complex recruited to centromeres which is involved in assembly of kinetochore proteins, mitotic progression and chromosome segregation. May be involved in incorporation of newly synthesized CENPA into centromeres via its interaction with the CENPA-NAC complex. The chain is Centromere protein R (Itgb3bp) from Mus musculus (Mouse).